A 965-amino-acid polypeptide reads, in one-letter code: Probable ion channel POLLUX (965 aa).

Positions methionine 1 to proline 11 are enriched in low complexity. 2 disordered regions span residues methionine 1–glycine 76 and glycine 108–alanine 158. The segment covering leucine 32–alanine 42 has biased composition (polar residues). Low complexity-rich tracts occupy residues serine 52–alanine 66 and arginine 118–serine 149. 4 helical membrane passes run leucine 187–tryptophan 207, alanine 251–valine 271, leucine 317–valine 337, and isoleucine 369–valine 389. 2 RCK N-terminal domains span residues valine 410 to valine 551 and proline 670 to isoleucine 818.

This sequence belongs to the castor/pollux (TC 1.A.1.23) family. In terms of tissue distribution, expressed in roots, leaves, stems and panicles.

It is found in the nucleus membrane. In terms of biological role, required for mycorrhizal symbiosis. The protein is Probable ion channel POLLUX of Oryza sativa subsp. japonica (Rice).